We begin with the raw amino-acid sequence, 370 residues long: MQTAARRSFDYDMPLIQTPTSACQIRQAWAKVADTPDRETADRLKDEIKALLKEKNAVLVAHYYVDPLIQDLALETGGCVGDSLEMARFGAEHEAGTLVVAGVRFMGESAKILCPEKTVLMPDLEAECSLDLGCPEEAFSAFCDQHPDRTVVVYANTSAAVKARADWVVTSSVALEIVSYLKSRGEKLIWGPDRHLGDYIRRETGADMLLWQGSCIVHNEFKGQELAALKAEHPDAVVLVHPESPQSVIELGDVVGSTSKLLKAAVSRPEKKFIVATDLGILHEMQKQAPDKEFIAAPTAGNGGSCKSCAFCPWMAMNSLGGIKYALTSGRNEILLDRKLGEAAKLPLQRMLDFAAGLKRGDVFNGMGPA.

His62 and Ser83 together coordinate iminosuccinate. Cys128 contacts [4Fe-4S] cluster. Residues 154 to 156 and Ser171 contribute to the iminosuccinate site; that span reads YAN. A [4Fe-4S] cluster-binding site is contributed by Cys215. Residues 241-243 and Thr258 contribute to the iminosuccinate site; that span reads HPE. A [4Fe-4S] cluster-binding site is contributed by Cys312.

It belongs to the quinolinate synthase family. Type 1 subfamily. It depends on [4Fe-4S] cluster as a cofactor.

The protein localises to the cytoplasm. The enzyme catalyses iminosuccinate + dihydroxyacetone phosphate = quinolinate + phosphate + 2 H2O + H(+). The protein operates within cofactor biosynthesis; NAD(+) biosynthesis; quinolinate from iminoaspartate: step 1/1. Catalyzes the condensation of iminoaspartate with dihydroxyacetone phosphate to form quinolinate. The polypeptide is Quinolinate synthase (Neisseria meningitidis serogroup C (strain 053442)).